Here is a 522-residue protein sequence, read N- to C-terminus: Putative cysteine ligase BshC (522 aa).

Positions Ser-436–Lys-469 form a coiled coil.

Belongs to the BshC family.

The chain is Putative cysteine ligase BshC from Cytophaga hutchinsonii (strain ATCC 33406 / DSM 1761 / CIP 103989 / NBRC 15051 / NCIMB 9469 / D465).